The following is a 122-amino-acid chain: Flagellar protein FliT (122 aa).

Positions 1-50 (MTSTVEFINRWQRIALLSQSLLELAQRGEWDLLLQQEVSYLQSIETVMEK) are required for homodimerization. The tract at residues 60 to 98 (IQDMVAGYIKQTLDNEQLLKGLLQQRLDELSSLIGQSTR) is fliD binding.

The protein belongs to the FliT family. Homodimer. Interacts with FliD and FlhC.

The protein localises to the cytoplasm. It is found in the cytosol. Dual-function protein that regulates the transcription of class 2 flagellar operons and that also acts as an export chaperone for the filament-capping protein FliD. As a transcriptional regulator, acts as an anti-FlhDC factor; it directly binds FlhC, thus inhibiting the binding of the FlhC/FlhD complex to class 2 promoters, resulting in decreased expression of class 2 flagellar operons. As a chaperone, effects FliD transition to the membrane by preventing its premature polymerization, and by directing it to the export apparatus. The sequence is that of Flagellar protein FliT from Salmonella schwarzengrund (strain CVM19633).